Here is a 251-residue protein sequence, read N- to C-terminus: Putative (5-formylfuran-3-yl)methyl phosphate synthase (251 aa).

K29 functions as the Schiff-base intermediate with substrate in the catalytic mechanism. K87 serves as the catalytic Proton acceptor.

Belongs to the MfnB family.

It catalyses the reaction 2 D-glyceraldehyde 3-phosphate = 4-(hydroxymethyl)-2-furancarboxaldehyde phosphate + phosphate + 2 H2O. Catalyzes the formation of 4-(hydroxymethyl)-2-furancarboxaldehyde phosphate (4-HFC-P) from two molecules of glyceraldehyde-3-P (GA-3-P). The polypeptide is Putative (5-formylfuran-3-yl)methyl phosphate synthase (Kitasatospora aureofaciens (Streptomyces aureofaciens)).